The sequence spans 542 residues: MAVKEVRFTSDARDRMLRGVDIMANAVRVTLGPKGRNVVIDKSFGAPRITKDGVSVAKEIELEDKFENMGAQMLREVASRTSDIAGDGTTTATVLAQAIVREGAKAVAAGMNPMDLKRGIDLAVEAIVRELRTNARKVSKNAEIAQVATISANGDAEIGRYLAEAMEKVGNEGVITVEEAKTAEIELEVVEGMQFDRGYLSPYFITNQEKMRVELEDAYILLHEKKLSNLQAMIPILESVIQSGKPLLIIAEDVEGEALATLVVNKLRGGLKIAAVKAPGFGDRRKSMLEDIAILTGGTVISEELGTKLESATIDILGRAKRVMVEKETTTIVDGAGSKADIGGRVAQIKAQIEDTTSDYDREKLQERLAKLAGGVAVIRVGGSTEIEVKEKKDRVDDALHATRAAVEEGILPGGGVALLRVVSVLNGLATANDDQRVGIEIVRRAIEAPVRQIAENAGAEGSIIVGKLREKEDFAFGWNAQTGEFGDLFQMGVIDPAKVVRAALQDAASVAGLLVTTEAMIAEKPKKDGQPQMPPAPGMDF.

ATP is bound by residues 30–33 (TLGP), K51, 87–91 (DGTTT), G415, and D496. The segment at 523–542 (AEKPKKDGQPQMPPAPGMDF) is disordered. The span at 533 to 542 (QMPPAPGMDF) shows a compositional bias: pro residues.

Belongs to the chaperonin (HSP60) family. As to quaternary structure, forms a cylinder of 14 subunits composed of two heptameric rings stacked back-to-back. Interacts with the co-chaperonin GroES.

It localises to the cytoplasm. It carries out the reaction ATP + H2O + a folded polypeptide = ADP + phosphate + an unfolded polypeptide.. Together with its co-chaperonin GroES, plays an essential role in assisting protein folding. The GroEL-GroES system forms a nano-cage that allows encapsulation of the non-native substrate proteins and provides a physical environment optimized to promote and accelerate protein folding. The protein is Chaperonin GroEL 2 of Sinorhizobium medicae (strain WSM419) (Ensifer medicae).